The chain runs to 183 residues: Oleosin 5 (183 aa).

Residues 1–39 (MADVRTHSHQLQVHPQRQHEGGIKVLYPQSGPSSTQVLA) are polar. The next 3 membrane-spanning stretches (helical) occupy residues 37-57 (VLAV…AGLT), 66-86 (MLAF…AFVI), and 87-107 (GLAM…LSSM). The tract at residues 40–113 (VFVGVPIGGT…LSSMSWVLNY (74 aa)) is hydrophobic. Positions 144 to 183 (KDAGQTIEDKAHDVREAKTFDVRDRDTTKGTHNVRDTKTT) are disordered.

This sequence belongs to the oleosin family.

The protein resides in the lipid droplet. It is found in the membrane. Its function is as follows. May have a structural role to stabilize the lipid body during desiccation of the seed by preventing coalescence of the oil. Probably interacts with both lipid and phospholipid moieties of lipid bodies. May also provide recognition signals for specific lipase anchorage in lipolysis during seedling growth. This Arabidopsis thaliana (Mouse-ear cress) protein is Oleosin 5.